A 258-amino-acid chain; its full sequence is Undecaprenyl-diphosphatase (258 aa).

Helical transmembrane passes span 1–21 (MSIIDAVILGIVEGLTEFLPV), 42–62 (LKCFEVVIQLGSILAVVFTFF), 71–91 (LWIKLIIGFLPTAAIGYLLYS), 96–116 (LFSQNVVVYMLIIWGVIFIVV), 134–154 (GISYKQAFFIGLSQCFAMVPG), 173–193 (QTAAAFSFLLAVPTMFAATFY), 211–231 (LFLLGGFVAFLVALFAIKMFL), and 237–257 (FDYIPFGIYRILIAFAFMFFV).

This sequence belongs to the UppP family.

It is found in the cell inner membrane. The enzyme catalyses di-trans,octa-cis-undecaprenyl diphosphate + H2O = di-trans,octa-cis-undecaprenyl phosphate + phosphate + H(+). In terms of biological role, catalyzes the dephosphorylation of undecaprenyl diphosphate (UPP). Confers resistance to bacitracin. The sequence is that of Undecaprenyl-diphosphatase from Campylobacter hominis (strain ATCC BAA-381 / DSM 21671 / CCUG 45161 / LMG 19568 / NCTC 13146 / CH001A).